The chain runs to 348 residues: Phenylalanine--tRNA ligase alpha subunit (348 aa).

Glu259 serves as a coordination point for Mg(2+).

This sequence belongs to the class-II aminoacyl-tRNA synthetase family. Phe-tRNA synthetase alpha subunit type 1 subfamily. As to quaternary structure, tetramer of two alpha and two beta subunits. The cofactor is Mg(2+).

It localises to the cytoplasm. It carries out the reaction tRNA(Phe) + L-phenylalanine + ATP = L-phenylalanyl-tRNA(Phe) + AMP + diphosphate + H(+). This is Phenylalanine--tRNA ligase alpha subunit from Ligilactobacillus salivarius (strain UCC118) (Lactobacillus salivarius).